Reading from the N-terminus, the 86-residue chain is Small muscular protein (86 aa).

The segment at 20–64 is disordered; the sequence is MGAFRPGAGQPPRRKECTPEIEEGAPPTSDEEKKPIPGAKKLPGP.

This sequence belongs to the SMPX family.

Its function is as follows. Plays a role in the regulatory network through which muscle cells coordinate their structural and functional states during growth, adaptation, and repair. In Bos taurus (Bovine), this protein is Small muscular protein (SMPX).